The sequence spans 505 residues: Trans-cinnamate 4-monooxygenase (505 aa).

A helical transmembrane segment spans residues 3-23; it reads LLLVEKTLLALFAAIIASIFI. (E)-cinnamate is bound by residues 213 to 218 and Ala-306; that span reads RSRLAQ. Cys-447 is a heme binding site.

The protein belongs to the cytochrome P450 family. Heme is required as a cofactor.

It is found in the membrane. The catalysed reaction is (E)-cinnamate + reduced [NADPH--hemoprotein reductase] + O2 = (E)-4-coumarate + oxidized [NADPH--hemoprotein reductase] + H2O + H(+). It functions in the pathway phenylpropanoid metabolism; trans-4-coumarate biosynthesis; trans-4-coumarate from trans-cinnamate: step 1/1. Its function is as follows. Catalyzes the first oxidative step of the phenylpropanoid pathway in higher plants by transforming trans-cinnamate into p-coumarate. The compounds formed by this pathway are essential components for lignification, pollination, and defense against ultraviolet light, predators and pathogens. The protein is Trans-cinnamate 4-monooxygenase (CYP73A12) of Zinnia elegans (Garden zinnia).